Reading from the N-terminus, the 320-residue chain is Ferrochelatase (320 aa).

Residues His194 and Glu275 each contribute to the Fe cation site.

The protein belongs to the ferrochelatase family.

It is found in the cytoplasm. The catalysed reaction is heme b + 2 H(+) = protoporphyrin IX + Fe(2+). It functions in the pathway porphyrin-containing compound metabolism; protoheme biosynthesis; protoheme from protoporphyrin-IX: step 1/1. In terms of biological role, catalyzes the ferrous insertion into protoporphyrin IX. In Stenotrophomonas maltophilia (strain R551-3), this protein is Ferrochelatase.